Reading from the N-terminus, the 206-residue chain is Small ribosomal subunit protein uS7 (206 aa).

Belongs to the universal ribosomal protein uS7 family. Component of the small ribosomal subunit.

Its subcellular location is the cytoplasm. In terms of biological role, component of the small ribosomal subunit. The ribosome is a large ribonucleoprotein complex responsible for the synthesis of proteins in the cell. The chain is Small ribosomal subunit protein uS7 from Entamoeba histolytica (strain ATCC 30459 / HM-1:IMSS / ABRM).